The sequence spans 339 residues: Dihydroorotate dehydrogenase (quinone) (339 aa).

FMN is bound by residues 64 to 68 and T88; that span reads AGADK. K68 contributes to the substrate binding site. 113–117 is a substrate binding site; the sequence is NRNGF. Residues N141 and N174 each coordinate FMN. N174 is a binding site for substrate. S177 functions as the Nucleophile in the catalytic mechanism. Substrate is bound at residue N179. 2 residues coordinate FMN: K219 and T247. 248 to 249 provides a ligand contact to substrate; sequence NT. FMN-binding positions include G270, G299, and 320 to 321; that span reads YS.

This sequence belongs to the dihydroorotate dehydrogenase family. Type 2 subfamily. Monomer. FMN serves as cofactor.

It is found in the cell membrane. The enzyme catalyses (S)-dihydroorotate + a quinone = orotate + a quinol. Its pathway is pyrimidine metabolism; UMP biosynthesis via de novo pathway; orotate from (S)-dihydroorotate (quinone route): step 1/1. Its function is as follows. Catalyzes the conversion of dihydroorotate to orotate with quinone as electron acceptor. In Pasteurella multocida (strain Pm70), this protein is Dihydroorotate dehydrogenase (quinone) (pyrD).